The following is a 344-amino-acid chain: 3,4-dihydroxy-2-butanone 4-phosphate synthase (344 aa).

The interval 1 to 202 is DHBP synthase; it reads MILKRVTEAL…VSDLISYRLE (202 aa). Residues 27–28, aspartate 32, 139–143, and glutamate 163 each bind D-ribulose 5-phosphate; these read RE and RTGHT. Residue glutamate 28 participates in Mg(2+) binding. Histidine 142 provides a ligand contact to Mg(2+). Residues 203–344 are GTP cyclohydrolase II-like; sequence NESLLKMFCQ…GLKLVETISL (142 aa).

It in the N-terminal section; belongs to the DHBP synthase family. This sequence in the C-terminal section; belongs to the GTP cyclohydrolase II family. It depends on Mg(2+) as a cofactor. Mn(2+) is required as a cofactor.

The enzyme catalyses D-ribulose 5-phosphate = (2S)-2-hydroxy-3-oxobutyl phosphate + formate + H(+). The protein operates within cofactor biosynthesis; riboflavin biosynthesis; 2-hydroxy-3-oxobutyl phosphate from D-ribulose 5-phosphate: step 1/1. Its function is as follows. Catalyzes the conversion of D-ribulose 5-phosphate to formate and 3,4-dihydroxy-2-butanone 4-phosphate. This chain is 3,4-dihydroxy-2-butanone 4-phosphate synthase (ribB), found in Helicobacter pylori (strain ATCC 700392 / 26695) (Campylobacter pylori).